We begin with the raw amino-acid sequence, 757 residues long: uncharacterized protein (757 aa).

The 70-residue stretch at 640 to 709 (GMILEGVVSN…ARKRIALTMR (70 aa)) folds into the S1 motif domain. The segment covering 711 to 741 (DDEPGGAKHKMPSENRSRERTAGRKPQRNDR) has biased composition (basic and acidic residues). Positions 711–757 (DDEPGGAKHKMPSENRSRERTAGRKPQRNDRAPANSAMADAFAKLKR) are disordered.

This is an uncharacterized protein from Neisseria meningitidis serogroup B (strain ATCC BAA-335 / MC58).